The following is a 184-amino-acid chain: ESX-1 secretion-associated protein EspD (184 aa).

Residues isoleucine 33–threonine 56 form a disordered region.

The protein resides in the secreted. Required for ESX-1 function. Required for the maintenance of adequate cellular levels of both EspA and EspC. Facilitates EsxA secretion. This Mycobacterium tuberculosis (strain CDC 1551 / Oshkosh) protein is ESX-1 secretion-associated protein EspD.